A 137-amino-acid polypeptide reads, in one-letter code: Lysozyme (137 aa).

Positions 1–18 (MQKLIIFALVVLCVGSEA) are cleaved as a signal peptide. Residues 19–137 (KTFTRCGLVH…QGSLPDISSC (119 aa)) enclose the C-type lysozyme domain. 4 disulfides stabilise this stretch: cysteine 24–cysteine 137, cysteine 45–cysteine 127, cysteine 79–cysteine 93, and cysteine 89–cysteine 107. Catalysis depends on residues glutamate 50 and aspartate 67.

It belongs to the glycosyl hydrolase 22 family.

The catalysed reaction is Hydrolysis of (1-&gt;4)-beta-linkages between N-acetylmuramic acid and N-acetyl-D-glucosamine residues in a peptidoglycan and between N-acetyl-D-glucosamine residues in chitodextrins.. Lysozymes have primarily a bacteriolytic function; those in tissues and body fluids are associated with the monocyte-macrophage system and enhance the activity of immunoagents. Active against E.coli and M.luteus. This is Lysozyme from Bombyx mori (Silk moth).